Reading from the N-terminus, the 685-residue chain is Polyphosphate kinase (685 aa).

Asn45 serves as a coordination point for ATP. Mg(2+)-binding residues include Arg372 and Arg402. Residues Pro427–Thr461 enclose the PLD phosphodiesterase 1 domain. The Phosphohistidine intermediate role is filled by His432. Positions 465, 561, and 589 each coordinate ATP. A PLD phosphodiesterase 2 domain is found at Asp584–Asn614.

It belongs to the polyphosphate kinase 1 (PPK1) family. Mg(2+) is required as a cofactor. An intermediate of this reaction is the autophosphorylated ppk in which a phosphate is covalently linked to a histidine residue through a N-P bond.

It catalyses the reaction [phosphate](n) + ATP = [phosphate](n+1) + ADP. Catalyzes the reversible transfer of the terminal phosphate of ATP to form a long-chain polyphosphate (polyP). The sequence is that of Polyphosphate kinase from Klebsiella pneumoniae.